The following is a 118-amino-acid chain: Small ribosomal subunit protein uS12cz/uS12cy (118 aa).

The protein belongs to the universal ribosomal protein uS12 family. Part of the 30S ribosomal subunit.

It localises to the plastid. The protein localises to the chloroplast. Its function is as follows. With S4 and S5 plays an important role in translational accuracy. Located at the interface of the 30S and 50S subunits. This Helianthus annuus (Common sunflower) protein is Small ribosomal subunit protein uS12cz/uS12cy (rps12-A).